A 353-amino-acid chain; its full sequence is Trans-enoyl reductase fsa3 (353 aa).

NADP(+) is bound at residue 45–48 (VDTK). 131-138 (ISFMTTGL) contacts substrate. NADP(+)-binding positions include 166-169 (SSAT), 189-192 (SPRN), tyrosine 207, and 254-255 (LE). 275–279 (GPQML) is a substrate binding site. 344–345 (IS) contacts NADP(+).

It belongs to the zinc-containing alcohol dehydrogenase family. As to quaternary structure, monomer.

It catalyses the reaction L-serine + 7 malonyl-CoA + acetyl-CoA + 2 S-adenosyl-L-methionine + ATP + 8 NADPH + 11 H(+) = (5S)-3-[(2E,6R,8E,10E,12E)-2,6-dimethyltetradeca-2,8,10,12-tetraenoyl]-5-(hydroxymethyl)pyrrolidine-2,4-dione + AMP + 2 S-adenosyl-L-homocysteine + 7 CO2 + diphosphate + 8 NADP(+) + 8 CoA + 6 H2O. The protein operates within mycotoxin biosynthesis. Trans-enoyl reductase; part of the gene cluster that mediates the biosynthesis of HIV-1 integrase inhibitor equisetin and of fusarisetin A, both trans-fused decalin-containing tetramic acids showing also antimicrobial activity. The PKS module of fsa1 together with the enoylreductase fsa3 catalyze the formation of the polyketide unit which is then conjugated to L-serine by the condensation domain of the fsa1 NRPS module. Activity of the Dieckmann cyclase domain (RED) results in release of the Dieckmann product intermediate. Diels-Alderase fsa2 is involved in endo-selective Diels-Alder cycloaddition to form the decalin ring, leading to the production of N-desmethylequisetin also called trichosetin. Subsequent N-methylation is carried out by fsa4 to give equisetin. The enzymatic gene responsible for the conversion of equisetin to fusarisetin A has not been identified yet and is probably located outside of the fsa cluster. This chain is Trans-enoyl reductase fsa3, found in Fusarium sp. (strain FN080326).